A 622-amino-acid chain; its full sequence is MADVPADLAAVWPRVLEQLLGEGQQGIEPKDKQWIERCQPLALVADTALLAVPNEWGKRVLEGRLAPLISETLTRECGRPIRIAITVDDSAGEPPAPPAPPMHQSHQGPQGHRYPSQQRDDAPRGDTYDGYGHRPSDDGMPTARPAYPDYQQQRPEPGAWPRTQEDLSWQQPRHGGYQDREQPPGEPYRESEAYQRESEQYREQPPEPWREPYGAGRPQQHDYRSQPPEHQGYEQQRPDRQDQQQPGPRPGGHGPGRTGGSVPGPMGAQPSPAPGPGEPHARLNPKYLFDTFVIGASNRFAHAAAVAVAEAPAKAYNPLFIYGESGLGKTHLLHAIGHYARSLYPGTRVRYVSSEEFTNEFINSIRDGKGDTFRKRYRDVDILLVDDIQFLASKESTQEEFFHTFNTLHNANKQIVLSSDRPPKQLVTLEDRLRNRFEWGLTTDVQPPELETRIAILRKKAVQEQLNAPPEVLEFIASRISRNIRELEGALIRVTAFASLNRQPVDLGLTEIVLKDLIPGGEESAPEITAPAIMAATADYFGLTVDDLCGSSRSRVLVTARQIAMYLCRELTDLSLPKIGAQFGGRDHTTVMHADRKIRALMAERRSIYNQVTELTNRIKNG.

Positions 1–99 (MADVPADLAA…SAGEPPAPPA (99 aa)) are domain I, interacts with DnaA modulators. The interval 88 to 282 (DDSAGEPPAP…APGPGEPHAR (195 aa)) is disordered. The segment at 100 to 281 (PPMHQSHQGP…PAPGPGEPHA (182 aa)) is domain II. Composition is skewed to basic and acidic residues over residues 118–137 (QRDDAPRGDTYDGYGHRPSD) and 176–210 (GYQDREQPPGEPYRESEAYQRESEQYREQPPEPWR). Residues 250–262 (PGGHGPGRTGGSV) show a composition bias toward gly residues. The tract at residues 282–498 (RLNPKYLFDT…GALIRVTAFA (217 aa)) is domain III, AAA+ region. ATP-binding residues include Gly326, Gly328, Lys329, and Thr330. The segment at 499–622 (SLNRQPVDLG…TELTNRIKNG (124 aa)) is domain IV, binds dsDNA.

The protein belongs to the DnaA family. As to quaternary structure, oligomerizes as a right-handed, spiral filament on DNA at oriC.

It localises to the cytoplasm. Functionally, plays an essential role in the initiation and regulation of chromosomal replication. ATP-DnaA binds to the origin of replication (oriC) to initiate formation of the DNA replication initiation complex once per cell cycle. Binds the DnaA box (a 9 base pair repeat at the origin) and separates the double-stranded (ds)DNA. Forms a right-handed helical filament on oriC DNA; dsDNA binds to the exterior of the filament while single-stranded (ss)DNA is stabiized in the filament's interior. The ATP-DnaA-oriC complex binds and stabilizes one strand of the AT-rich DNA unwinding element (DUE), permitting loading of DNA polymerase. After initiation quickly degrades to an ADP-DnaA complex that is not apt for DNA replication. Binds acidic phospholipids. This Streptomyces griseus subsp. griseus (strain JCM 4626 / CBS 651.72 / NBRC 13350 / KCC S-0626 / ISP 5235) protein is Chromosomal replication initiator protein DnaA.